A 359-amino-acid polypeptide reads, in one-letter code: Quinolinate synthase (359 aa).

Iminosuccinate contacts are provided by His-81 and Ser-99. Residue Cys-144 coordinates [4Fe-4S] cluster. Iminosuccinate is bound by residues 170 to 172 (YVN) and Ser-187. A [4Fe-4S] cluster-binding site is contributed by Cys-229. Iminosuccinate contacts are provided by residues 255-257 (HPE) and Thr-272. Cys-315 is a binding site for [4Fe-4S] cluster.

Belongs to the quinolinate synthase family. Type 2 subfamily. Requires [4Fe-4S] cluster as cofactor.

Its subcellular location is the cytoplasm. It carries out the reaction iminosuccinate + dihydroxyacetone phosphate = quinolinate + phosphate + 2 H2O + H(+). The protein operates within cofactor biosynthesis; NAD(+) biosynthesis; quinolinate from iminoaspartate: step 1/1. Functionally, catalyzes the condensation of iminoaspartate with dihydroxyacetone phosphate to form quinolinate. This chain is Quinolinate synthase, found in Sinorhizobium fredii (strain NBRC 101917 / NGR234).